A 252-amino-acid polypeptide reads, in one-letter code: Endonuclease NucS (252 aa).

The protein belongs to the NucS endonuclease family.

It localises to the cytoplasm. Its function is as follows. Cleaves both 3' and 5' ssDNA extremities of branched DNA structures. This chain is Endonuclease NucS, found in Thermococcus kodakarensis (strain ATCC BAA-918 / JCM 12380 / KOD1) (Pyrococcus kodakaraensis (strain KOD1)).